A 308-amino-acid chain; its full sequence is Aspartate carbamoyltransferase catalytic subunit (308 aa).

Carbamoyl phosphate is bound by residues Arg58 and Thr59. Lys86 lines the L-aspartate pocket. Carbamoyl phosphate is bound by residues Arg108, His136, and Gln139. Residues Arg169 and Arg222 each coordinate L-aspartate. Positions 264 and 265 each coordinate carbamoyl phosphate.

It belongs to the aspartate/ornithine carbamoyltransferase superfamily. ATCase family. As to quaternary structure, heterododecamer (2C3:3R2) of six catalytic PyrB chains organized as two trimers (C3), and six regulatory PyrI chains organized as three dimers (R2).

The enzyme catalyses carbamoyl phosphate + L-aspartate = N-carbamoyl-L-aspartate + phosphate + H(+). The protein operates within pyrimidine metabolism; UMP biosynthesis via de novo pathway; (S)-dihydroorotate from bicarbonate: step 2/3. Catalyzes the condensation of carbamoyl phosphate and aspartate to form carbamoyl aspartate and inorganic phosphate, the committed step in the de novo pyrimidine nucleotide biosynthesis pathway. The chain is Aspartate carbamoyltransferase catalytic subunit from Campylobacter hominis (strain ATCC BAA-381 / DSM 21671 / CCUG 45161 / LMG 19568 / NCTC 13146 / CH001A).